The chain runs to 144 residues: MAKKKIEAIIKLQVAAGKANPSPPIGPALGQHGVNIMGFCKEFNAKTQGMEPGMPIPVEISVYSDRSFTFEMKTPPASYLIKKAINVKSGSSKPSKEFIGTITRAQLEEIAKVKDPDLTAADLDAAVRIIAGSARSMGVKVEGV.

The protein belongs to the universal ribosomal protein uL11 family. Part of the ribosomal stalk of the 50S ribosomal subunit. Interacts with L10 and the large rRNA to form the base of the stalk. L10 forms an elongated spine to which L12 dimers bind in a sequential fashion forming a multimeric L10(L12)X complex. Post-translationally, one or more lysine residues are methylated.

In terms of biological role, forms part of the ribosomal stalk which helps the ribosome interact with GTP-bound translation factors. In Francisella tularensis subsp. holarctica (strain OSU18), this protein is Large ribosomal subunit protein uL11.